Consider the following 131-residue polypeptide: Holo-[acyl-carrier-protein] synthase (131 aa).

The Mg(2+) site is built by D8 and E59.

Belongs to the P-Pant transferase superfamily. AcpS family. Mg(2+) is required as a cofactor.

The protein localises to the cytoplasm. The catalysed reaction is apo-[ACP] + CoA = holo-[ACP] + adenosine 3',5'-bisphosphate + H(+). Transfers the 4'-phosphopantetheine moiety from coenzyme A to a Ser of acyl-carrier-protein. This chain is Holo-[acyl-carrier-protein] synthase, found in Rickettsia felis (strain ATCC VR-1525 / URRWXCal2) (Rickettsia azadi).